We begin with the raw amino-acid sequence, 133 residues long: Glycine cleavage system H protein (133 aa).

Residues 30-112 form the Lipoyl-binding domain; that stretch reads TITVGITHHA…YGAGWFFKIK (83 aa). Lys71 is subject to N6-lipoyllysine.

This sequence belongs to the GcvH family. In terms of assembly, the glycine cleavage system is composed of four proteins: P, T, L and H. (R)-lipoate is required as a cofactor.

Functionally, the glycine cleavage system catalyzes the degradation of glycine. The H protein shuttles the methylamine group of glycine from the P protein to the T protein. This chain is Glycine cleavage system H protein, found in Neisseria gonorrhoeae (strain ATCC 700825 / FA 1090).